Consider the following 537-residue polypeptide: Chaperonin GroEL (537 aa).

Residues 31–34, 87–91, Gly-415, and Asp-495 contribute to the ATP site; these read TLGP and DGTTT.

The protein belongs to the chaperonin (HSP60) family. Forms a cylinder of 14 subunits composed of two heptameric rings stacked back-to-back. Interacts with the co-chaperonin GroES.

The protein localises to the cytoplasm. The enzyme catalyses ATP + H2O + a folded polypeptide = ADP + phosphate + an unfolded polypeptide.. Functionally, together with its co-chaperonin GroES, plays an essential role in assisting protein folding. The GroEL-GroES system forms a nano-cage that allows encapsulation of the non-native substrate proteins and provides a physical environment optimized to promote and accelerate protein folding. The chain is Chaperonin GroEL from Methanoregula boonei (strain DSM 21154 / JCM 14090 / 6A8).